Reading from the N-terminus, the 31-residue chain is Cyclotide mden-L (31 aa).

Residues 1 to 31 constitute a cross-link (cyclopeptide (Gly-Asn)); the sequence is GSIPCGESCVYIPCISAVLGCSCKNKVCYRN. 3 disulfides stabilise this stretch: cysteine 5-cysteine 21, cysteine 9-cysteine 23, and cysteine 14-cysteine 28.

Belongs to the cyclotide family. Bracelet subfamily. This is a cyclic peptide.

Functionally, probably participates in a plant defense mechanism. In Melicytus dentatus (Tree violet), this protein is Cyclotide mden-L.